A 328-amino-acid polypeptide reads, in one-letter code: Palmitoyltransferase ZDHHC15A (328 aa).

Over 1–14 the chain is Cytoplasmic; the sequence is MLLPACLRRCARLL. The chain crosses the membrane as a helical span at residues 15–35; sequence FWIPVLVVIVVVMWSYYAYVV. The Lumenal portion of the chain corresponds to 36-48; it reads HFCWILLSSATQR. A helical transmembrane segment spans residues 49–69; it reads VVFLCLFHLCFGMFSWSFWKA. Residues 70–166 lie on the Cytoplasmic side of the membrane; the sequence is VSTPPSSPSV…NNCMGFSNYK (97 aa). The region spanning 123–173 is the DHHC domain; the sequence is RFCHHCQLIKPDRCHHCSVCQTCVLKMDHHCLWLNNCMGFSNYKFFMLFLL. 2 residues coordinate Zn(2+): Cys-125 and Cys-128. Lys-132 serves as a coordination point for substrate. His-138, Cys-139, Cys-142, Cys-145, and His-152 together coordinate Zn(2+). Cys-153 functions as the S-palmitoyl cysteine intermediate in the catalytic mechanism. Residue Cys-159 coordinates Zn(2+). Residues 167-187 traverse the membrane as a helical segment; sequence FFMLFLLYSLLYCLLIVSTVT. Over 188–206 the chain is Lumenal; the sequence is PTVIQLWRGRLFDSCVKLH. Residues 207–227 form a helical membrane-spanning segment; the sequence is VLFLTLVSAIFAITLCFLLIF. Residues 228–328 lie on the Cytoplasmic side of the membrane; it reads HIWLLTSNKT…KEAAVTIAVD (101 aa).

The protein belongs to the DHHC palmitoyltransferase family. Post-translationally, autopalmitoylated (in vitro).

It localises to the golgi apparatus membrane. The protein resides in the postsynaptic density. The enzyme catalyses L-cysteinyl-[protein] + hexadecanoyl-CoA = S-hexadecanoyl-L-cysteinyl-[protein] + CoA. It carries out the reaction L-cysteinyl-[protein] + tetradecanoyl-CoA = S-tetradecanoyl-L-cysteinyl-[protein] + CoA. The catalysed reaction is L-cysteinyl-[protein] + octadecanoyl-CoA = S-octadecanoyl-L-cysteinyl-[protein] + CoA. In terms of biological role, palmitoyltransferase that catalyzes the addition of palmitate onto various protein substrates. Has no stringent fatty acid selectivity and in addition to palmitate can also transfer onto target proteins myristate from tetradecanoyl-CoA and stearate from octadecanoyl-CoA. May thereby regulate target proteins association and localization to membranes. The chain is Palmitoyltransferase ZDHHC15A (zdhhc15a) from Danio rerio (Zebrafish).